Consider the following 131-residue polypeptide: Leptin receptor overlapping transcript-like 1 (131 aa).

Transmembrane regions (helical) follow at residues 7-27 (LISLSFGGAIGLMFLMLGCAL), 32-52 (QYWPLFVLFFYILSPIPYCIA), 69-89 (LAIFLTTGVVVSAFGLPVVFA), and 100-120 (ALVLTGNTVIFATILGFFLVF).

This sequence belongs to the OB-RGRP/VPS55 family. As to quaternary structure, interacts with RAB13.

Its subcellular location is the membrane. In terms of biological role, negatively regulates growth hormone (GH) receptor cell surface expression in liver. May play a role in liver resistance to GH during periods of reduced nutrient availability. In Rattus norvegicus (Rat), this protein is Leptin receptor overlapping transcript-like 1 (Leprotl1).